Consider the following 121-residue polypeptide: Small ribosomal subunit protein uS13 (121 aa).

Residues 94–121 (GLPVRGQRTRTNARTRKGPRKGAAALKK) are disordered.

It belongs to the universal ribosomal protein uS13 family. In terms of assembly, part of the 30S ribosomal subunit. Forms a loose heterodimer with protein S19. Forms two bridges to the 50S subunit in the 70S ribosome.

Located at the top of the head of the 30S subunit, it contacts several helices of the 16S rRNA. In the 70S ribosome it contacts the 23S rRNA (bridge B1a) and protein L5 of the 50S subunit (bridge B1b), connecting the 2 subunits; these bridges are implicated in subunit movement. Contacts the tRNAs in the A and P-sites. This is Small ribosomal subunit protein uS13 from Verminephrobacter eiseniae (strain EF01-2).